The sequence spans 325 residues: Probable WRKY transcription factor 11 (325 aa).

The segment at residues 240–306 is a DNA-binding region (WRKY); the sequence is KIADIPPDEY…YEGEHRHNQS (67 aa).

It belongs to the WRKY group II-d family. As to expression, in young, mature and senescent leaves.

It localises to the nucleus. Functionally, transcription factor. Interacts specifically with the W box (5'-(T)TGAC[CT]-3'), a frequently occurring elicitor-responsive cis-acting element. Regulates rhizobacterium B.cereus AR156-induced systemic resistance (ISR) to P.syringae pv. tomato DC3000, probably by activating the jasmonic acid (JA)- signaling pathway. The protein is Probable WRKY transcription factor 11 (WRKY11) of Arabidopsis thaliana (Mouse-ear cress).